The primary structure comprises 782 residues: Phosphate transporter PHO1 (782 aa).

Over 1–386 the chain is Cytoplasmic; that stretch reads MVKFSKELEA…HQTKDSHMVT (386 aa). In terms of domain architecture, SPX spans 2-334; sequence VKFSKELEAQ…GQNASSTYLK (333 aa). Residues 165–202 are disordered; the sequence is KKRNLSGSNSHRSFSSSVRNSDFSAGSPGELSEIQSET. The span at 170 to 188 shows a compositional bias: low complexity; sequence SGSNSHRSFSSSVRNSDFS. Positions 315 to 322 are important for inositol polyphosphate binding; the sequence is KIMKKFDK. Residues 387-407 traverse the membrane as a helical segment; that stretch reads FFVGLFTGCFISLFVIYIILA. The Lumenal segment spans residues 408 to 423; the sequence is HLSGIFTSSDQVSYLE. A helical membrane pass occupies residues 424–444; that stretch reads TVYPVFSVFALLSLHMFMYGC. At 445–473 the chain is on the cytoplasmic side; it reads NLYMWKNTRINYTFIFEFAPNTALRYRDA. A helical membrane pass occupies residues 474 to 494; the sequence is FLMGTTFMTSVVAAMVIHLIL. At 495 to 506 the chain is on the lumenal side; that stretch reads RASGFSASQVDT. Residues 507-527 form a helical membrane-spanning segment; the sequence is IPGILLLIFICVLICPFNTFY. Residues 528–593 lie on the Cytoplasmic side of the membrane; that stretch reads RPTRFCFIRI…THEYNTCKNG (66 aa). The EXS domain occupies 591–782; that stretch reads KNGRYYREFA…LPFLDRDSDG (192 aa). The chain crosses the membrane as a helical span at residues 594–614; sequence RYYREFAYLISFLPYFWRAMQ. Residues 615–619 lie on the Lumenal side of the membrane; that stretch reads CVRRW. Residues 620–639 traverse the membrane as a helical segment; it reads WDESNPDHLINMGKYVSAMV. Topologically, residues 640-782 are cytoplasmic; the sequence is AAGVRITYAR…LPFLDRDSDG (143 aa).

The protein belongs to the SYG1 (TC 2.A.94) family. Interacts with PHO2. PHO1 degradation is PHO2 dependent and involves multivesicular body-mediated vacuolar proteolysis. In terms of tissue distribution, predominantly in roots, but also weak expression in the lower part of the hypocotyl. In the stellar cells, including the pericycle and xylem parenchyma cells, but not in the cortical or epidermal cells. Expressed in guard cells.

It localises to the golgi apparatus membrane. It is found in the golgi apparatus. Its subcellular location is the trans-Golgi network membrane. The protein localises to the endoplasmic reticulum membrane. Inositol polyphosphate sensor that associates with transcription factors to regulate inorganic phosphate (Pi) starvation responses. Probably acts by binding inositol polyphosphate via its SPX domain. Acts as a Pi exporter, mediating efflux of Pi out of cells. Transfers Pi from the epidermal and cortical cells to the root xylem vessels. Involved in the transfer of Pi from roots to shoots. Involved in abscisic acid (ABA) induction of stomatal closure and ABA repression of stomatal opening. The polypeptide is Phosphate transporter PHO1 (Arabidopsis thaliana (Mouse-ear cress)).